A 208-amino-acid chain; its full sequence is uncharacterized protein (208 aa).

The segment covering 118 to 134 has biased composition (low complexity); that stretch reads QYPNQYQQQPQQQQPGY. Positions 118-208 are disordered; that stretch reads QYPNQYQQQP…HKKEKNEIKE (91 aa). Residues 138–175 show a composition bias toward polar residues; sequence NYNQPPVQLNKQAYDNYQQNDYKSNNQPNLAKENNISN. Basic residues predominate over residues 187–201; it reads KKEKKHSFFSKLHKK.

This is an uncharacterized protein from Dictyostelium discoideum (Social amoeba).